Reading from the N-terminus, the 463-residue chain is Chromosomal replication initiator protein DnaA (463 aa).

Positions 1 to 84 (MNTNQIILTN…QLFQHYNNAI (84 aa)) are domain I, interacts with DnaA modulators. The segment at 84–124 (IKTVEIITKELPASNQATLELPTKTFADIGSSELNSENIFS) is domain II. The interval 125–343 (TFDIRFTFDN…GALNKVIAHS (219 aa)) is domain III, AAA+ region. ATP contacts are provided by G171, G173, K174, and T175. Residues 344-463 (NFTAKEITLE…INLMMKILQN (120 aa)) are domain IV, binds dsDNA.

Belongs to the DnaA family. Oligomerizes as a right-handed, spiral filament on DNA at oriC.

It localises to the cytoplasm. In terms of biological role, plays an essential role in the initiation and regulation of chromosomal replication. ATP-DnaA binds to the origin of replication (oriC) to initiate formation of the DNA replication initiation complex once per cell cycle. Binds the DnaA box (a 9 base pair repeat at the origin) and separates the double-stranded (ds)DNA. Forms a right-handed helical filament on oriC DNA; dsDNA binds to the exterior of the filament while single-stranded (ss)DNA is stabiized in the filament's interior. The ATP-DnaA-oriC complex binds and stabilizes one strand of the AT-rich DNA unwinding element (DUE), permitting loading of DNA polymerase. After initiation quickly degrades to an ADP-DnaA complex that is not apt for DNA replication. Binds acidic phospholipids. The chain is Chromosomal replication initiator protein DnaA from Rickettsia bellii (strain RML369-C).